A 104-amino-acid polypeptide reads, in one-letter code: Large ribosomal subunit protein uL24 (104 aa).

It belongs to the universal ribosomal protein uL24 family. Part of the 50S ribosomal subunit.

Functionally, one of two assembly initiator proteins, it binds directly to the 5'-end of the 23S rRNA, where it nucleates assembly of the 50S subunit. In terms of biological role, one of the proteins that surrounds the polypeptide exit tunnel on the outside of the subunit. The polypeptide is Large ribosomal subunit protein uL24 (Clostridium perfringens (strain ATCC 13124 / DSM 756 / JCM 1290 / NCIMB 6125 / NCTC 8237 / Type A)).